Reading from the N-terminus, the 789-residue chain is Glycerol-3-phosphate acyltransferase (789 aa).

Positions 276 to 281 (HRSYID) match the HXXXXD motif motif.

The protein belongs to the GPAT/DAPAT family.

The protein resides in the cell membrane. It catalyses the reaction sn-glycerol 3-phosphate + an acyl-CoA = a 1-acyl-sn-glycero-3-phosphate + CoA. It functions in the pathway phospholipid metabolism; CDP-diacylglycerol biosynthesis; CDP-diacylglycerol from sn-glycerol 3-phosphate: step 1/3. The protein is Glycerol-3-phosphate acyltransferase (plsB) of Mycobacterium tuberculosis (strain CDC 1551 / Oshkosh).